Reading from the N-terminus, the 574-residue chain is PI-PLC X domain-containing protein DDB_G0269228 (574 aa).

The tract at residues Met-1–Lys-42 is disordered. The span at Thr-21–Ser-34 shows a compositional bias: low complexity. The PI-PLC X-box domain maps to Gly-270–Gly-449.

The chain is PI-PLC X domain-containing protein DDB_G0269228 from Dictyostelium discoideum (Social amoeba).